Reading from the N-terminus, the 1388-residue chain is ESX-5 secretion system protein EccC5 (1388 aa).

A run of 2 helical transmembrane segments spans residues 38 to 58 (WLIV…AMVF) and 65 to 85 (FGGV…MMMF). 3 consecutive FtsK domains span residues 477–679 (GELL…GAAQ), 855–1049 (QPPW…EDAK), and 1158–1351 (LQPV…DPDE). ATP is bound by residues 500-507 (GTTGSGKS), 873-880 (GAGGSGKT), and 1175-1182 (GRRECGRT).

As to quaternary structure, part of the ESX-5 / type VII secretion system (T7SS), which is composed of cytosolic and membrane components. The ESX-5 membrane complex is composed of EccB5, EccC5, EccD5 and EccE5.

The protein resides in the cell inner membrane. Its function is as follows. Part of the ESX-5 specialized secretion system, which is responsible for the secretion of EsxN and a number of PE_PGRS and PPE proteins. This component is essential for ESX-5 complex stability and secretion. This chain is ESX-5 secretion system protein EccC5, found in Mycobacterium marinum (strain ATCC BAA-535 / M).